The primary structure comprises 526 residues: ATP synthase subunit alpha (526 aa).

171 to 178 is a binding site for ATP; sequence GDRQTGKT.

Belongs to the ATPase alpha/beta chains family. In terms of assembly, F-type ATPases have 2 components, CF(1) - the catalytic core - and CF(0) - the membrane proton channel. CF(1) has five subunits: alpha(3), beta(3), gamma(1), delta(1), epsilon(1). CF(0) has three main subunits: a(1), b(2) and c(9-12). The alpha and beta chains form an alternating ring which encloses part of the gamma chain. CF(1) is attached to CF(0) by a central stalk formed by the gamma and epsilon chains, while a peripheral stalk is formed by the delta and b chains.

It is found in the cell inner membrane. The catalysed reaction is ATP + H2O + 4 H(+)(in) = ADP + phosphate + 5 H(+)(out). Its function is as follows. Produces ATP from ADP in the presence of a proton gradient across the membrane. The alpha chain is a regulatory subunit. The chain is ATP synthase subunit alpha from Cytophaga hutchinsonii (strain ATCC 33406 / DSM 1761 / CIP 103989 / NBRC 15051 / NCIMB 9469 / D465).